A 141-amino-acid polypeptide reads, in one-letter code: NADPH-dependent 7-cyano-7-deazaguanine reductase (141 aa).

The active-site Thioimide intermediate is the cysteine 56. Aspartate 63 (proton donor) is an active-site residue. Substrate-binding positions include 78-80 (VEL) and 97-98 (HE).

The protein belongs to the GTP cyclohydrolase I family. QueF type 1 subfamily.

The protein resides in the cytoplasm. The catalysed reaction is 7-aminomethyl-7-carbaguanine + 2 NADP(+) = 7-cyano-7-deazaguanine + 2 NADPH + 3 H(+). Its pathway is tRNA modification; tRNA-queuosine biosynthesis. In terms of biological role, catalyzes the NADPH-dependent reduction of 7-cyano-7-deazaguanine (preQ0) to 7-aminomethyl-7-deazaguanine (preQ1). The polypeptide is NADPH-dependent 7-cyano-7-deazaguanine reductase (Trichodesmium erythraeum (strain IMS101)).